A 130-amino-acid chain; its full sequence is MSGRGKQGGKARAKAKTRSSRAGLQFPVGRVHRLLRKGNYAERVGAGAPVYLAAVLEYLTAEILELAGNAARDNKKTRIIPRHLQLAIRNDEELNKLLGRVTIAQGGVLPNIQAVLLPKKTESHHKAKGK.

The tract at residues 1–22 (MSGRGKQGGKARAKAKTRSSRA) is disordered. At serine 2 the chain carries N-acetylserine. Serine 2 is modified (phosphoserine; by RPS6KA5). The residue at position 4 (arginine 4) is a Citrulline; alternate. Arginine 4 bears the Symmetric dimethylarginine; by PRMT5; alternate mark. Lysine 6 and lysine 10 each carry N6-(2-hydroxyisobutyryl)lysine; alternate. Lysine 6 is subject to N6-acetyllysine; alternate. Over residues 7–19 (QGGKARAKAKTRS) the composition is skewed to basic residues. Lysine 10 carries the post-translational modification N6-lactoyllysine; alternate. Position 10 is an N6-succinyllysine; alternate (lysine 10). Residues lysine 14 and lysine 16 each participate in a glycyl lysine isopeptide (Lys-Gly) (interchain with G-Cter in ubiquitin) cross-link. Residue lysine 37 is modified to N6-(2-hydroxyisobutyryl)lysine; alternate. At lysine 37 the chain carries N6-(beta-hydroxybutyryl)lysine; alternate. Lysine 37 bears the N6-crotonyllysine; alternate mark. Lysine 75 and lysine 76 each carry N6-(2-hydroxyisobutyryl)lysine. Position 96 is an N6-(2-hydroxyisobutyryl)lysine; alternate (lysine 96). The residue at position 96 (lysine 96) is an N6-succinyllysine; alternate. At lysine 96 the chain carries N6-glutaryllysine; alternate. The residue at position 105 (glutamine 105) is an N5-methylglutamine. At lysine 119 the chain carries N6-(2-hydroxyisobutyryl)lysine; alternate. N6-crotonyllysine; alternate is present on residues lysine 119 and lysine 120. Residues lysine 119 and lysine 120 each carry the N6-glutaryllysine; alternate modification. Lysine 120 is covalently cross-linked (Glycyl lysine isopeptide (Lys-Gly) (interchain with G-Cter in ubiquitin); alternate). At threonine 121 the chain carries Phosphothreonine; by DCAF1. Lysine 126 carries the post-translational modification N6-crotonyllysine; alternate. The residue at position 126 (lysine 126) is an N6-glutaryllysine; alternate.

It belongs to the histone H2A family. As to quaternary structure, the nucleosome is a histone octamer containing two molecules each of H2A, H2B, H3 and H4 assembled in one H3-H4 heterotetramer and two H2A-H2B heterodimers. The octamer wraps approximately 147 bp of DNA. In terms of processing, deiminated on Arg-4 in granulocytes upon calcium entry. Monoubiquitination of Lys-120 (H2AK119Ub) by RING1, TRIM37 and RNF2/RING2 complex gives a specific tag for epigenetic transcriptional repression and participates in X chromosome inactivation of female mammals. It is involved in the initiation of both imprinted and random X inactivation. Ubiquitinated H2A is enriched in inactive X chromosome chromatin. Ubiquitination of H2A functions downstream of methylation of 'Lys-27' of histone H3 (H3K27me). H2AK119Ub by RNF2/RING2 can also be induced by ultraviolet and may be involved in DNA repair. Following DNA double-strand breaks (DSBs), it is ubiquitinated through 'Lys-63' linkage of ubiquitin moieties by the E2 ligase UBE2N and the E3 ligases RNF8 and RNF168, leading to the recruitment of repair proteins to sites of DNA damage. Ubiquitination at Lys-14 and Lys-16 (H2AK13Ub and H2AK15Ub, respectively) in response to DNA damage is initiated by RNF168 that mediates monoubiquitination at these 2 sites, and 'Lys-63'-linked ubiquitin are then conjugated to monoubiquitin; RNF8 is able to extend 'Lys-63'-linked ubiquitin chains in vitro. H2AK119Ub and ionizing radiation-induced 'Lys-63'-linked ubiquitination (H2AK13Ub and H2AK15Ub) are distinct events. Post-translationally, phosphorylation on Ser-2 (H2AS1ph) is enhanced during mitosis. Phosphorylation on Ser-2 by RPS6KA5/MSK1 directly represses transcription. Acetylation of H3 inhibits Ser-2 phosphorylation by RPS6KA5/MSK1. Phosphorylation at Thr-121 (H2AT120ph) by DCAF1 is present in the regulatory region of many tumor suppresor genes and down-regulates their transcription. In terms of processing, symmetric dimethylation on Arg-4 by the PRDM1/PRMT5 complex may play a crucial role in the germ-cell lineage. Glutamine methylation at Gln-105 (H2AQ104me) by FBL is specifically dedicated to polymerase I. It is present at 35S ribosomal DNA locus and impairs binding of the FACT complex. Post-translationally, crotonylation (Kcr) is specifically present in male germ cells and marks testis-specific genes in post-meiotic cells, including X-linked genes that escape sex chromosome inactivation in haploid cells. Crotonylation marks active promoters and enhancers and confers resistance to transcriptional repressors. It is also associated with post-meiotically activated genes on autosomes. In terms of processing, lactylated in macrophages by EP300/P300 by using lactoyl-CoA directly derived from endogenous or exogenous lactate, leading to stimulates gene transcription.

The protein localises to the nucleus. Its subcellular location is the chromosome. In terms of biological role, core component of nucleosome. Nucleosomes wrap and compact DNA into chromatin, limiting DNA accessibility to the cellular machineries which require DNA as a template. Histones thereby play a central role in transcription regulation, DNA repair, DNA replication and chromosomal stability. DNA accessibility is regulated via a complex set of post-translational modifications of histones, also called histone code, and nucleosome remodeling. The polypeptide is Histone H2A type 1-E (Rattus norvegicus (Rat)).